The sequence spans 646 residues: Peptidylprolyl isomerase domain and WD repeat-containing protein 1 (646 aa).

Residues 1–30 form a disordered region; the sequence is MAAESGSDFQQRRRRRRDPEEPEKTELSER. A2 carries the post-translational modification N-acetylalanine. Residues 17–30 are compositionally biased toward basic and acidic residues; sequence RDPEEPEKTELSER. WD repeat units lie at residues 88–126, 131–170, 221–260, and 278–319; these read MHRD…IEFV, SHLG…MINM, LHTS…YKFP, and KCKA…RVFD. Basic and acidic residues predominate over residues 455–478; that stretch reads EPEDTKSADSDRDVFNEKPSKEEV. Positions 455 to 490 are disordered; the sequence is EPEDTKSADSDRDVFNEKPSKEEVMAATQAEGPKRV. The region spanning 490-645 is the PPIase cyclophilin-type domain; sequence VSDSAIIHTS…EDVSIINITV (156 aa).

Belongs to the cyclophilin-type PPIase family. PPIL1 subfamily. Identified in the spliceosome C complex.

The protein localises to the nucleus. The catalysed reaction is [protein]-peptidylproline (omega=180) = [protein]-peptidylproline (omega=0). Its activity is regulated as follows. Inhibited by cyclosporin A (CsA). PPIase that catalyzes the cis-trans isomerization of proline imidic peptide bonds in oligopeptides and may therefore assist protein folding. May be involved in pre-mRNA splicing. This is Peptidylprolyl isomerase domain and WD repeat-containing protein 1 from Pongo abelii (Sumatran orangutan).